Reading from the N-terminus, the 266-residue chain is Ciliary microtubule inner protein 4 (266 aa).

Polar residues-rich tracts occupy residues 1–15 (MELS…LTRT) and 24–38 (QDMN…SLDN). The segment at 1–124 (MELSHRQGTT…SPEQRTVPLS (124 aa)) is disordered. Low complexity predominate over residues 47–63 (LSQSPLGSSLGQGYLET). Residues 81–102 (HPEDLKKGASRSSSRDARETFR) show a composition bias toward basic and acidic residues.

In terms of tissue distribution, only detected in testis, in the spermatids and sperm within the seminiferous tubules (at protein level).

It localises to the cytoplasmic vesicle. Its subcellular location is the secretory vesicle. It is found in the acrosome. The protein resides in the cell projection. The protein localises to the cilium. It localises to the flagellum. In terms of biological role, seems to be associated with spermiogenesis but is not essential for sperm development and male fertility. The sequence is that of Ciliary microtubule inner protein 4 (Cimip4) from Mus musculus (Mouse).